The following is a 337-amino-acid chain: Serpentine receptor class delta-50 (337 aa).

7 consecutive transmembrane segments (helical) span residues 10–30 (VLIL…SQLL), 48–68 (IYLF…FVLQ), 107–127 (VLFH…IIAF), 147–167 (QLVI…LSPN), 202–222 (SSQT…ALVF), 250–270 (GLTL…TYYI), and 280–300 (LFVE…DPLL).

Belongs to the nematode receptor-like protein srd family.

The protein localises to the membrane. In Caenorhabditis elegans, this protein is Serpentine receptor class delta-50.